The sequence spans 325 residues: Elongation factor P--(R)-beta-lysine ligase (325 aa).

Position 76–78 (76–78 (SPE)) interacts with substrate. Residues 100–102 (RNE) and N109 contribute to the ATP site. Y118 is a substrate binding site. 244 to 245 (EL) contacts ATP. E251 is a substrate binding site. G300 provides a ligand contact to ATP.

The protein belongs to the class-II aminoacyl-tRNA synthetase family. EpmA subfamily. As to quaternary structure, homodimer.

It carries out the reaction D-beta-lysine + L-lysyl-[protein] + ATP = N(6)-((3R)-3,6-diaminohexanoyl)-L-lysyl-[protein] + AMP + diphosphate + H(+). In terms of biological role, with EpmB is involved in the beta-lysylation step of the post-translational modification of translation elongation factor P (EF-P) on 'Lys-34'. Catalyzes the ATP-dependent activation of (R)-beta-lysine produced by EpmB, forming a lysyl-adenylate, from which the beta-lysyl moiety is then transferred to the epsilon-amino group of EF-P 'Lys-34'. The chain is Elongation factor P--(R)-beta-lysine ligase from Salmonella choleraesuis (strain SC-B67).